The primary structure comprises 440 residues: uncharacterized protein (440 aa).

The N-terminal stretch at 1 to 19 (MKKLLLAASIVYFASACLA) is a signal peptide.

This is an uncharacterized protein from Rickettsia prowazekii (strain Madrid E).